Reading from the N-terminus, the 77-residue chain is Small ribosomal subunit protein uS17 (77 aa).

This sequence belongs to the universal ribosomal protein uS17 family. In terms of assembly, part of the 30S ribosomal subunit.

In terms of biological role, one of the primary rRNA binding proteins, it binds specifically to the 5'-end of 16S ribosomal RNA. This is Small ribosomal subunit protein uS17 from Rickettsia akari (strain Hartford).